Reading from the N-terminus, the 258-residue chain is Beta carbonic anhydrase 3 (258 aa).

A signal peptide spans 1–28 (MSTESYEDAIKRLGELLSKKSDLGNVAA). A coiled-coil region spans residues 24-54 (GNVAAAKIKKLTDELEELDSNKLDAVERIKS). Thr35 carries the post-translational modification Phosphothreonine. Ser95 bears the Phosphoserine mark. Residue Cys201 is modified to S-nitrosocysteine.

It belongs to the beta-class carbonic anhydrase family. In terms of tissue distribution, strongly expressed in aerial tissues including leaves, stems, flowers and siliques, and, to a lower extent, in roots.

It is found in the cytoplasm. The protein resides in the cytosol. The enzyme catalyses hydrogencarbonate + H(+) = CO2 + H2O. Its function is as follows. Reversible hydration of carbon dioxide. The protein is Beta carbonic anhydrase 3 (BCA3) of Arabidopsis thaliana (Mouse-ear cress).